Reading from the N-terminus, the 353-residue chain is Quinolinate synthase (353 aa).

The iminosuccinate site is built by His-49 and Ser-70. Cys-115 is a binding site for [4Fe-4S] cluster. Iminosuccinate-binding positions include 141–143 (YAN) and Ser-158. Cys-202 is a [4Fe-4S] cluster binding site. Iminosuccinate is bound by residues 228 to 230 (HPE) and Thr-245. Residue Cys-299 coordinates [4Fe-4S] cluster.

It belongs to the quinolinate synthase family. Type 1 subfamily. [4Fe-4S] cluster serves as cofactor.

Its subcellular location is the cytoplasm. It carries out the reaction iminosuccinate + dihydroxyacetone phosphate = quinolinate + phosphate + 2 H2O + H(+). The protein operates within cofactor biosynthesis; NAD(+) biosynthesis; quinolinate from iminoaspartate: step 1/1. Functionally, catalyzes the condensation of iminoaspartate with dihydroxyacetone phosphate to form quinolinate. The sequence is that of Quinolinate synthase from Hahella chejuensis (strain KCTC 2396).